A 99-amino-acid polypeptide reads, in one-letter code: Large ribosomal subunit protein bL28 (99 aa).

The protein belongs to the bacterial ribosomal protein bL28 family.

The chain is Large ribosomal subunit protein bL28 from Rhizobium leguminosarum bv. trifolii (strain WSM2304).